The sequence spans 304 residues: Dermonecrotic toxin LiSicTox-betaIA1i (304 aa).

Residues 1–21 (MLLPAVISFIVYAVFLQEANG) form the signal peptide. A propeptide spanning residues 22–26 (HAAER) is cleaved from the precursor. Residue H38 is part of the active site. E58 and D60 together coordinate Mg(2+). H74 acts as the Nucleophile in catalysis. 2 disulfides stabilise this stretch: C78/C84 and C80/C223. D118 is a binding site for Mg(2+).

It belongs to the arthropod phospholipase D family. Class II subfamily. Class IIb sub-subfamily. The cofactor is Mg(2+). Expressed by the venom gland.

The protein localises to the secreted. It carries out the reaction an N-(acyl)-sphingosylphosphocholine = an N-(acyl)-sphingosyl-1,3-cyclic phosphate + choline. The catalysed reaction is an N-(acyl)-sphingosylphosphoethanolamine = an N-(acyl)-sphingosyl-1,3-cyclic phosphate + ethanolamine. The enzyme catalyses a 1-acyl-sn-glycero-3-phosphocholine = a 1-acyl-sn-glycero-2,3-cyclic phosphate + choline. It catalyses the reaction a 1-acyl-sn-glycero-3-phosphoethanolamine = a 1-acyl-sn-glycero-2,3-cyclic phosphate + ethanolamine. Functionally, dermonecrotic toxins cleave the phosphodiester linkage between the phosphate and headgroup of certain phospholipids (sphingolipid and lysolipid substrates), forming an alcohol (often choline) and a cyclic phosphate. This toxin acts on sphingomyelin (SM) with low activity. It may also act on ceramide phosphoethanolamine (CPE), lysophosphatidylcholine (LPC) and lysophosphatidylethanolamine (LPE), but not on lysophosphatidylserine (LPS), and lysophosphatidylglycerol (LPG). It acts by transphosphatidylation, releasing exclusively cyclic phosphate products as second products. Induces inflammatory response but no or very weak hemolysis, dermonecrosis, vascular permeability, edema, and cytotoxicity against renal epithelial cells. Causes swelling and erythema. In vivo, is not lethal to mice when intraperitoneally injected. This chain is Dermonecrotic toxin LiSicTox-betaIA1i, found in Loxosceles intermedia (Brown spider).